The following is a 414-amino-acid chain: Probable sugar-binding periplasmic protein (414 aa).

A signal peptide spans 1 to 22; the sequence is MRKFMTTTAVAALMLAATAARA.

This sequence belongs to the bacterial solute-binding protein 1 family.

Its subcellular location is the periplasm. Part of a binding-protein-dependent transport system for a sugar. In Rhizobium meliloti (strain 1021) (Ensifer meliloti), this protein is Probable sugar-binding periplasmic protein.